A 151-amino-acid polypeptide reads, in one-letter code: MSNEQNLTEEQISEFKEAFSLFDKDGDGSITTKELGIVMRSLGQNPTEAELQDMVNEVDADGNGTIDFPEFLAMMARKMKDVDSEEEIREAFKVFDKDGNGIISAAELRHVMTNLGEKLTDEEVDEMIREADVDGDGVIDYSEFVKMMLSK.

EF-hand domains are found at residues 10-45 (EQISEFKEAFSLFDKDGDGSITTKELGIVMRSLGQN), 46-81 (PTEAELQDMVNEVDADGNGTIDFPEFLAMMARKMKD), 83-118 (DSEEEIREAFKVFDKDGNGIISAAELRHVMTNLGEK), and 119-151 (LTDEEVDEMIREADVDGDGVIDYSEFVKMMLSK). Positions 23, 25, 27, 29, 34, 59, 61, 63, 65, 70, 96, 98, 100, 107, 132, 134, 136, and 143 each coordinate Ca(2+).

The protein belongs to the calmodulin family.

In terms of biological role, calmodulin mediates the control of a large number of enzymes, ion channels and other proteins by Ca(2+). Among the enzymes to be stimulated by the calmodulin-Ca(2+) complex are a number of protein kinases and phosphatases. This chain is Calmodulin, found in Pneumocystis carinii.